Reading from the N-terminus, the 212-residue chain is Large ribosomal subunit protein uL4 (212 aa).

Positions 43–52 (NNRQGTASTK) are enriched in polar residues. Positions 43–77 (NNRQGTASTKTRSEVRGGGRKPWRQKGTGRARAGS) are disordered. Positions 60–71 (GGRKPWRQKGTG) are enriched in basic residues.

It belongs to the universal ribosomal protein uL4 family. In terms of assembly, part of the 50S ribosomal subunit.

In terms of biological role, one of the primary rRNA binding proteins, this protein initially binds near the 5'-end of the 23S rRNA. It is important during the early stages of 50S assembly. It makes multiple contacts with different domains of the 23S rRNA in the assembled 50S subunit and ribosome. Functionally, forms part of the polypeptide exit tunnel. In Trichodesmium erythraeum (strain IMS101), this protein is Large ribosomal subunit protein uL4.